The following is a 215-amino-acid chain: Putative B3 domain-containing protein Os11g0625400 (215 aa).

The segment at residues 1–51 (MTVELEKIAGSFFISKGWKTFVHRTGLLSGQYIRFQVLTPSKINVLLFDKK) is a DNA-binding region (TF-B3 1). The disordered stretch occupies residues 92–117 (SHTSNKETSSDSRTESMTDIPSSSDN). Basic and acidic residues predominate over residues 95-107 (SNKETSSDSRTES). Over residues 108–117 (MTDIPSSSDN) the composition is skewed to polar residues. The segment at residues 123–215 (DIKNYISIIG…PNVKITIDVL (93 aa)) is a DNA-binding region (TF-B3 2).

The protein localises to the nucleus. This Oryza sativa subsp. japonica (Rice) protein is Putative B3 domain-containing protein Os11g0625400.